The following is a 200-amino-acid chain: Recombination protein RecR (200 aa).

The C4-type zinc finger occupies 57 to 72 (CRLCRTLTEEELCPQC). The 96-residue stretch at 80 to 175 (TLLCVVEGPT…VASRIAHGVP (96 aa)) folds into the Toprim domain.

It belongs to the RecR family.

Functionally, may play a role in DNA repair. It seems to be involved in an RecBC-independent recombinational process of DNA repair. It may act with RecF and RecO. The chain is Recombination protein RecR from Pseudomonas syringae pv. tomato (strain ATCC BAA-871 / DC3000).